Consider the following 836-residue polypeptide: Neuroligin-2 (836 aa).

An N-terminal signal peptide occupies residues 1 to 14 (MWLLALCLVGLAGA). Topologically, residues 15–678 (QRGGGGPGGG…DSRDYSTELS (664 aa)) are extracellular. N-linked (GlcNAc...) asparagine glycosylation is found at N98 and N136. 3 disulfides stabilise this stretch: C106–C141, C317–C328, and C487–C521. N522 is a glycosylation site (N-linked (GlcNAc...) asparagine). Residues 623–661 (PPYATRWPPRTPGPGTSGTRRPPPPATLPPESDIDLGPR) form a disordered region. Residues 679–699 (VTVAVGASLLFLNILAFAALY) traverse the membrane as a helical segment. Positions 679 to 699 (VTVAVGASLLFLNILAFAALY) are required for interaction with LHFPL4. Residues 700-836 (YKRDRRQELR…LPHPHSTTRV (137 aa)) lie on the Cytoplasmic side of the membrane. Disordered regions lie at residues 711–735 (RRLSPPGGSGSGVPGGGPLLPTAGR) and 791–836 (LLPS…TTRV). A phosphoserine mark is found at S714 and S719. Residues 717–728 (GGSGSGVPGGGP) are compositionally biased toward gly residues. Residues 796–819 (LGPPPPPPPPSLHPFGPFPPPPPT) are compositionally biased toward pro residues. Positions 824-836 (NNTLPHPHSTTRV) are enriched in polar residues.

Belongs to the type-B carboxylesterase/lipase family. Interacts with neurexins NRXN1, NRXN2 and NRXN3. Interaction with neurexins is mediated by heparan sulfate glycan modification on neurexin. Interacts (via its C-terminus) with DLG4/PSD-95 (via PDZ domain 3). Interacts with PATJ. Interacts with MDGA2. Interacts with GPHN. Interacts with MDGA1. Found in a complex with MAGI2 and IGSF9B, where it interacts with MAGI2 (via WW 1, WW 2 and PDZ 2 domains). Identified in a complex of 720 kDa composed of LHFPL4, NLGN2, GABRA1, GABRB2, GABRG2 and GABRB3. Interacts with LHFPL4; leading to mutual regulation of the protein level and synaptic clustering. Interacts with GABRA1. Brain and arteries. Detected in the retina outer plexiform layer (at protein level). Widely expressed. Detected in heart, brain, spleen, lung, liver, skeletal muscle, kidney and testis.

The protein localises to the cell membrane. It localises to the postsynaptic cell membrane. The protein resides in the presynaptic cell membrane. Its function is as follows. Transmembrane scaffolding protein involved in cell-cell interactions via its interactions with neurexin family members. Mediates cell-cell interactions both in neurons and in other types of cells, such as Langerhans beta cells. Mediates cell-cell interactions between Langerhans beta cells and modulates insulin secretion. Plays a role in synapse function and synaptic signal transmission, especially via gamma-aminobutyric acid receptors (GABA(A) receptors). Functions by recruiting and clustering synaptic proteins. Promotes clustering of postsynaptic GABRG2 and GPHN. Promotes clustering of postsynaptic LHFPL4. Modulates signaling by inhibitory synapses, and thereby plays a role in controlling the ratio of signaling by excitatory and inhibitory synapses and information processing. Required for normal signal amplitude from inhibitory synapses, but is not essential for normal signal frequency. May promote the initial formation of synapses, but is not essential for this. In vitro, triggers the de novo formation of presynaptic structures. The chain is Neuroligin-2 (Nlgn2) from Mus musculus (Mouse).